The chain runs to 691 residues: Proprotein convertase subtilisin/kexin type 9 (691 aa).

The first 29 residues, 1-29 (MGTVSSRRLWWPLPLLLLLLLLGPAGARA), serve as a signal peptide directing secretion. The propeptide occupies 30 to 151 (QEDDDGDYEE…IEEDSSVFAQ (122 aa)). Position 37 is a sulfotyrosine (Y37). S46 is modified (phosphoserine). An Inhibitor I9 domain is found at 76–148 (TYVVVLKEET…VDYIEEDSSV (73 aa)). The region spanning 154-460 (PWNLERITPA…GWQLFCRTVW (307 aa)) is the Peptidase S8 domain. Catalysis depends on charge relay system residues D185 and H225. 2 disulfides stabilise this stretch: C222–C254 and C322–C357. The active-site Charge relay system is the S385. A C-terminal domain region spans residues 449–691 (GAGWQLFCRT…HLAQASQELQ (243 aa)). Disulfide bonds link C456–C526, C476–C525, and C485–C508. N-linked (GlcNAc...) asparagine glycosylation occurs at N532. Cystine bridges form between C533-C600, C551-C599, C561-C587, C607-C678, C625-C677, and C634-C653. S687 carries the post-translational modification Phosphoserine.

The protein belongs to the peptidase S8 family. In terms of assembly, monomer. Can self-associate to form dimers and higher multimers which may have increased LDLR degrading activity. The precursor protein but not the mature protein may form multimers. Interacts with APOB, VLDLR, LRP8/APOER2 and BACE1. The full-length immature form (pro-PCSK9) interacts with SCNN1A, SCNN1B and SCNN1G. The pro-PCSK9 form (via C-terminal domain) interacts with LDLR. Interacts (via the C-terminal domain) with ANXA2 (via repeat Annexin 1); the interaction inhibits the degradation of LDLR. It depends on Ca(2+) as a cofactor. Cleavage by furin and PCSK5 generates a truncated inactive protein that is unable to induce LDLR degradation. In terms of processing, undergoes autocatalytic cleavage in the endoplasmic reticulum to release the propeptide from the N-terminus and the cleavage of the propeptide is strictly required for its maturation and activation. The cleaved propeptide however remains associated with the catalytic domain through non-covalent interactions, preventing potential substrates from accessing its active site. As a result, it is secreted from cells as a propeptide-containing, enzymatically inactive protein. Post-translationally, phosphorylation protects the propeptide against proteolysis.

The protein localises to the cytoplasm. It is found in the secreted. It localises to the endosome. Its subcellular location is the lysosome. The protein resides in the cell surface. The protein localises to the endoplasmic reticulum. It is found in the golgi apparatus. With respect to regulation, its proteolytic activity is autoinhibited by the non-covalent binding of the propeptide to the catalytic domain. Inhibited by EGTA. Functionally, crucial player in the regulation of plasma cholesterol homeostasis. Binds to low-density lipid receptor family members: low density lipoprotein receptor (LDLR), very low density lipoprotein receptor (VLDLR), apolipoprotein E receptor (LRP1/APOER) and apolipoprotein receptor 2 (LRP8/APOER2), and promotes their degradation in intracellular acidic compartments. Acts via a non-proteolytic mechanism to enhance the degradation of the hepatic LDLR through a clathrin LDLRAP1/ARH-mediated pathway. May prevent the recycling of LDLR from endosomes to the cell surface or direct it to lysosomes for degradation. Can induce ubiquitination of LDLR leading to its subsequent degradation. Inhibits intracellular degradation of APOB via the autophagosome/lysosome pathway in a LDLR-independent manner. Involved in the disposal of non-acetylated intermediates of BACE1 in the early secretory pathway. Inhibits epithelial Na(+) channel (ENaC)-mediated Na(+) absorption by reducing ENaC surface expression primarily by increasing its proteasomal degradation. Regulates neuronal apoptosis via modulation of LRP8/APOER2 levels and related anti-apoptotic signaling pathways. This is Proprotein convertase subtilisin/kexin type 9 (PCSK9) from Saimiri boliviensis boliviensis (Bolivian squirrel monkey).